Consider the following 198-residue polypeptide: NADH-quinone oxidoreductase subunit C (198 aa).

This sequence belongs to the complex I 30 kDa subunit family. As to quaternary structure, NDH-1 is composed of 14 different subunits. Subunits NuoB, C, D, E, F, and G constitute the peripheral sector of the complex.

The protein resides in the cell inner membrane. It catalyses the reaction a quinone + NADH + 5 H(+)(in) = a quinol + NAD(+) + 4 H(+)(out). NDH-1 shuttles electrons from NADH, via FMN and iron-sulfur (Fe-S) centers, to quinones in the respiratory chain. The immediate electron acceptor for the enzyme in this species is believed to be ubiquinone. Couples the redox reaction to proton translocation (for every two electrons transferred, four hydrogen ions are translocated across the cytoplasmic membrane), and thus conserves the redox energy in a proton gradient. This is NADH-quinone oxidoreductase subunit C from Herminiimonas arsenicoxydans.